The chain runs to 151 residues: MSTPEKRPVSFFSLFNRGQHYAKTWPLDKRLAPVFIENRIIRATRYAIRIMPPIAIFTLCWQIALGGQLGPAVATALFALSLPMQGLWWLGKRSVTPLPPSILNWFYEVRGKLQEAGQALAPVEGKPDYQALADTLKRAFKQLDKTFLDDL.

2 consecutive transmembrane segments (helical) span residues 46 to 65 (YAIR…QIAL) and 69 to 91 (LGPA…WWLG).

It belongs to the UPF0208 family.

It localises to the cell inner membrane. This is UPF0208 membrane protein KPN78578_26420 from Klebsiella pneumoniae subsp. pneumoniae (strain ATCC 700721 / MGH 78578).